We begin with the raw amino-acid sequence, 399 residues long: Argininosuccinate synthase (399 aa).

8 to 16 (AYSGGLDTS) contributes to the ATP binding site. An L-citrulline-binding site is contributed by Tyr-87. ATP is bound at residue Gly-117. L-aspartate-binding residues include Thr-119, Asn-123, and Asp-124. Asn-123 contributes to the L-citrulline binding site. L-citrulline is bound by residues Arg-127, Ser-175, Glu-260, and Tyr-272.

It belongs to the argininosuccinate synthase family. Type 1 subfamily. Homotetramer.

It is found in the cytoplasm. It catalyses the reaction L-citrulline + L-aspartate + ATP = 2-(N(omega)-L-arginino)succinate + AMP + diphosphate + H(+). It participates in amino-acid biosynthesis; L-arginine biosynthesis; L-arginine from L-ornithine and carbamoyl phosphate: step 2/3. This is Argininosuccinate synthase from Rhodococcus jostii (strain RHA1).